The primary structure comprises 34 residues: Brevinin-2GHa (34 aa).

A disulfide bridge connects residues cysteine 27 and cysteine 33.

As to expression, expressed by the skin glands.

It is found in the secreted. In terms of biological role, antimicrobial peptide. Active against the Gram-positive bacteria S.aureus FDA209P (MIC=14.9 ug/ml) and B.subtilis ATCC 6633 (MIC&gt;64 ug/ml), but not active against the Gram-negative bacterium E.coli or the fungus C.albicans. This chain is Brevinin-2GHa, found in Sylvirana guentheri (Gunther's frog).